A 395-amino-acid chain; its full sequence is Phosphoglycerate kinase (395 aa).

Substrate contacts are provided by residues D21–N23, R36, H59–R62, R120, and R153. Residues K203, E325, and G351–S354 each bind ATP.

Belongs to the phosphoglycerate kinase family. In terms of assembly, monomer.

It is found in the cytoplasm. It catalyses the reaction (2R)-3-phosphoglycerate + ATP = (2R)-3-phospho-glyceroyl phosphate + ADP. The protein operates within carbohydrate degradation; glycolysis; pyruvate from D-glyceraldehyde 3-phosphate: step 2/5. The polypeptide is Phosphoglycerate kinase (Roseiflexus sp. (strain RS-1)).